The following is a 586-amino-acid chain: Alanine racemase ungC (586 aa).

Positions 187-206 (RVGALPAAASTASPMGSSLP) are disordered. The segment covering 196–206 (STASPMGSSLP) has biased composition (polar residues).

The protein belongs to the trans-sulfuration enzymes family. The cofactor is pyridoxal 5'-phosphate.

It carries out the reaction L-alanine = D-alanine. Its pathway is secondary metabolite biosynthesis. In terms of biological role, alanine racemase; part of the gene cluster that mediates the biosynthesis of the unguisins, gamma-aminobutyric acid (GABA)-containing fungal cyclic heptapeptides with the amino acid sequence cyclo-(D-Ala1-D-Val2-L-Phe3-D-Val4-D-Ala5-D-Trp6-GABA7) for unguisin A and cyclo-(D-Ala1-D-Val2-L-Leu3-D-Val4-D-Ala5-D-Trp6-GABA7) for unguisin B. Within the pathway, the alanine racemase ungC catalyzes the interconversion of L-alanine and D-alanine, providing the D-alanine which is accepted by the first adenylation domain of the nonribosomal peptide synthetase (NRPS) ungA. UngA is the main enzyme within the cluster which condenses the 7 residues using its respective 7 modules. The terminal condensation domain (Ct) is involved in cyclization with D-alanine and thereby releasing of unguisins A and B. Finally, the hydrolase ungD catalyzes the hydrolysis between the D-tryptophan and GABA residues of unguisins A and B to produce the corresponding linear peptides. The polypeptide is Alanine racemase ungC (Aspergillus violaceofuscus (strain CBS 115571)).